Reading from the N-terminus, the 977-residue chain is MKKFFVTAAFPYVNGYLHLGHLVTYIKAEITARYKKMRGYDVLFPMGFHATGAPIYAAAYKVSIGDPKQIETLKKMGIKDIEKFKDPAYWVEYFSKAAKEDLSKLGFMIEWERSFTTVFNKPFHKFVEWQYHRLREKGYIYRGAHPIVWDPKVNMVIGDHDRPDDYAGIRPIEGVIIKFYSKDLDAYLPAFTLRPETVFGVVNIWVNPETEYVLAKVKKVFYVYELYSLYKKFGRLPLNIENRDKLEKLIQDYNNLLDRLKQYEKGIDLIAHAEEIAYKPKEEFVKELKEFAEKEGIKIEEKDIELLYEYYNTKVETQEEKWILPNTIVIEELKNQDFEIEIIGKIDKLIKTLAENPVTKELVPVLPAKFVDPEVGTGIVMSVPSHAPYDYVGLLDLIKTELKEFAEQALKNVRPVVKVEGFSEMPAKDIVESMNITSQEERDKLEKATQRLYSKEFYHGVLTEHAQQFQGLPVKEAKMKIAEYLMENGYGYIYYTLPVRFKSRYGNKVVVKLVKGQWFIKYSDKQWKELAHKAVENMKFYPPQVKELIKEKIDWYDDWAFTHQKELGTALPWDPKWVIESLSDSTIYTAYYTIAHILQHPEKYNIDWDKLTIDVFDYVFLGKGDPKEIAKKTGISEEILKEMRNQFEYWYPVDIRFSAQDLIANHLVFYIFHHVAIFPESKWPRGIAVSGFVTVNGEKMSKSKGNFITIREAIQRYGRDAVRLAAAYAGNAELVDQNIDLEFMEKAKNEIIPRIESYLDMEGYDRDENSLDKWIVNRIRLYFKKLEEYYENIRPRDVINEFFKLENDFNFYRALVLEKPHKRAIEYFKKAVKALWPIIPHVVREPAWIGKEEPDEPWIRVGQYVDQVIKDLANTLKLVRISMARNVSHRLADLVKLYYEGAKLTEEEKEEIREFIEWKPVRIKIIYKNPSEFDILRDIIPYIEKVFGGKVVLELASESKEEKAKRAKEFKPAFVIE.

A 'HIGH' region motif is present at residues 11-21 (PYVNGYLHLGH). An insert region spans residues 220 to 318 (VFYVYELYSL…EYYNTKVETQ (99 aa)). A 'KMSKS' region motif is present at residues 699–703 (KMSKS). Lys-702 contributes to the ATP binding site.

Belongs to the class-I aminoacyl-tRNA synthetase family.

Its subcellular location is the cytoplasm. The catalysed reaction is tRNA(Leu) + L-leucine + ATP = L-leucyl-tRNA(Leu) + AMP + diphosphate. This chain is Leucine--tRNA ligase (leuS), found in Nanoarchaeum equitans (strain Kin4-M).